The chain runs to 680 residues: Probable Xaa-Pro aminopeptidase P (680 aa).

Residues Asp477, Asp488, Glu586, and Glu600 each coordinate Mn(2+).

This sequence belongs to the peptidase M24B family. Requires Mn(2+) as cofactor.

The enzyme catalyses Release of any N-terminal amino acid, including proline, that is linked to proline, even from a dipeptide or tripeptide.. Its function is as follows. Catalyzes the removal of a penultimate prolyl residue from the N-termini of peptides. This chain is Probable Xaa-Pro aminopeptidase P (AMPP), found in Podospora anserina (strain S / ATCC MYA-4624 / DSM 980 / FGSC 10383) (Pleurage anserina).